We begin with the raw amino-acid sequence, 712 residues long: Patatin-like phospholipase domain-containing protein AFUA_1G04970 (712 aa).

Residues methionine 1–tyrosine 13 are compositionally biased toward basic and acidic residues. The tract at residues methionine 1–aspartate 20 is disordered. Residues tryptophan 85–threonine 105 form a helical membrane-spanning segment. The PNPLA domain maps to leucine 275–asparagine 466. A GXSXG motif is present at residues glycine 306–glycine 310. The Nucleophile role is filled by serine 308. Catalysis depends on aspartate 453, which acts as the Proton acceptor. Residues arginine 628–glutamate 688 form a disordered region. Composition is skewed to basic and acidic residues over residues aspartate 632–aspartate 646 and arginine 652–glutamate 664. A compositionally biased stretch (polar residues) spans aspartate 667–proline 676. Basic and acidic residues predominate over residues histidine 677 to glutamate 688.

The protein belongs to the PLPL family.

It localises to the membrane. Its function is as follows. Probable lipid hydrolase. This Aspergillus fumigatus (strain ATCC MYA-4609 / CBS 101355 / FGSC A1100 / Af293) (Neosartorya fumigata) protein is Patatin-like phospholipase domain-containing protein AFUA_1G04970.